Here is a 326-residue protein sequence, read N- to C-terminus: MSNISVIGTGSYVPNNIITNDFLSTIVDTSDEWIRTRTGILERRISKGENTIYMATESAKEAIKNANIEANDLDLIIVATLTPDNFMPSTACSVQKEIGAINALCFDISAACSGFIYGLEIACSMLKNSFRNKALIIGAENLSKIVDWEDRNTCVLFGDGAGAAILSKTKEEGILEFHSRSNGLKGEHLTCGALEANNIFNKDDMLKNNKFIKMNGKEIFRFAVGAMSETIYSIQEKTKWDLSEVKYIISHQANSRIIEYTAKKLNTNKDKFYMNLDKYGNTSAASIPIALDEMNKKGLLNKQDKIILVGFGGGLTFGGVAILWSI.

Active-site residues include Cys112 and His251. An ACP-binding region spans residues 252–256; sequence QANSR. The active site involves Asn281.

It belongs to the thiolase-like superfamily. FabH family. Homodimer.

Its subcellular location is the cytoplasm. The enzyme catalyses malonyl-[ACP] + acetyl-CoA + H(+) = 3-oxobutanoyl-[ACP] + CO2 + CoA. It participates in lipid metabolism; fatty acid biosynthesis. In terms of biological role, catalyzes the condensation reaction of fatty acid synthesis by the addition to an acyl acceptor of two carbons from malonyl-ACP. Catalyzes the first condensation reaction which initiates fatty acid synthesis and may therefore play a role in governing the total rate of fatty acid production. Possesses both acetoacetyl-ACP synthase and acetyl transacylase activities. Its substrate specificity determines the biosynthesis of branched-chain and/or straight-chain of fatty acids. This is Beta-ketoacyl-[acyl-carrier-protein] synthase III from Clostridium botulinum (strain Okra / Type B1).